The sequence spans 271 residues: Aquaporin-11 (271 aa).

Over 1–14 the chain is Cytoplasmic; that stretch reads MSALLGLRPEVQDT. Residues 15–35 form a helical membrane-spanning segment; sequence CISLGLMLLFVLFVGLARVIA. The Lumenal portion of the chain corresponds to 36 to 41; that stretch reads RQQLHR. The helical transmembrane segment at 42 to 62 threads the bilayer; that stretch reads PVVHAFVLEFLATFQLCCCTH. Topologically, residues 63–76 are cytoplasmic; it reads ELQVLSEQDSAHPT. A helical membrane pass occupies residues 77–97; that stretch reads WTLTLIYFFSLVHGLTLVGTA. Topologically, residues 98 to 166 are lumenal; it reads SNPCGVMMQM…NPIHTDMSKA (69 aa). The short motif at 99–101 is the NPC element; the sequence is NPC. Residues 167–187 traverse the membrane as a helical segment; sequence IIIEAICSFIFHSALLHFQEV. Over 188–194 the chain is Cytoplasmic; the sequence is RTKLRIH. Residues 195-215 traverse the membrane as a helical segment; that stretch reads LLAALITFLAYAGGSLTGALF. The short motif at 216–218 is the NPA element; the sequence is NPA. The Lumenal segment spans residues 216 to 234; sequence NPALALSLHFPCFDELFYK. Residues 235 to 255 traverse the membrane as a helical segment; sequence FFVVYWLAPSVGVLMMILMFS. At 256–271 the chain is on the cytoplasmic side; the sequence is FFLPWLHNNQMTNKKE.

It belongs to the MIP/aquaporin (TC 1.A.8) family. AQP11/AQP12 subfamily. As to quaternary structure, homodimer; disulfide-linked. Homotetramer. Can also form homomultimer. Not glycosylated. As to expression, highly expressed in the S1 proximal tubule segment,. Expressed in the testis, kidney, and liver. Weakly expressed in the heart, brain, and muscle. Highly expressed in the testis. Expressed in the proximal tubule of the cortex of 8-day-old mouse kidney. Expressed in retina specifically at retinal Mueller glial cells. Expressed in brain. Expressed abundantly at the choroid plexus but also expressed weakly in the parenchyma. Expressed at the capillary endothelium in the cerebral white matter. Expressed in adult testis, in the elongated spermatids (ES) and in residual bodies inside Sertoli cells.

The protein resides in the endoplasmic reticulum membrane. Its subcellular location is the cytoplasmic vesicle membrane. It localises to the cell membrane. The catalysed reaction is H2O(in) = H2O(out). It catalyses the reaction glycerol(in) = glycerol(out). It carries out the reaction H2O2(out) = H2O2(in). In terms of biological role, channel protein that facilitates the transport of water, glycerol and hydrogen peroxide across membrane of cell or organelles guaranteeing intracellular homeostasis in several organes like liver, kidney and brain. In situation of stress, participates in endoplasmic reticulum (ER) homeostasis by regulating redox homeostasis through the transport of hydrogen peroxide across the endoplasmic reticulum membrane thereby regulating the oxidative stress through the NADPH oxidase 2 pathway. Plays a role by maintaining an environment suitable for translation or protein foldings in the ER lumen namely by participating in the PKD1 glycosylation processing resulting in regulation of PKD1 membrane trafficking thereby preventing the accumulation of unfolding protein in ER. Plays a role in the proximal tubule function by regulating its endosomal acidification. May play a role in postnatal kidney development. The protein is Aquaporin-11 of Mus musculus (Mouse).